Reading from the N-terminus, the 69-residue chain is UPF0337 protein YjbJ (69 aa).

The protein belongs to the UPF0337 (CsbD) family.

This Escherichia coli O157:H7 protein is UPF0337 protein YjbJ (yjbJ).